We begin with the raw amino-acid sequence, 519 residues long: 2-isopropylmalate synthase (519 aa).

The Pyruvate carboxyltransferase domain occupies 5–267 (VVIFDTTLRD…STNINYKEIY (263 aa)). Residues aspartate 14, histidine 202, histidine 204, and asparagine 238 each contribute to the Mn(2+) site. The tract at residues 392-519 (SLKFFSVQSI…LKILKDFKKK (128 aa)) is regulatory domain.

This sequence belongs to the alpha-IPM synthase/homocitrate synthase family. LeuA type 1 subfamily. Homodimer. Mn(2+) is required as a cofactor.

The protein resides in the cytoplasm. It catalyses the reaction 3-methyl-2-oxobutanoate + acetyl-CoA + H2O = (2S)-2-isopropylmalate + CoA + H(+). It participates in amino-acid biosynthesis; L-leucine biosynthesis; L-leucine from 3-methyl-2-oxobutanoate: step 1/4. Its function is as follows. Catalyzes the condensation of the acetyl group of acetyl-CoA with 3-methyl-2-oxobutanoate (2-ketoisovalerate) to form 3-carboxy-3-hydroxy-4-methylpentanoate (2-isopropylmalate). This chain is 2-isopropylmalate synthase, found in Buchnera aphidicola subsp. Acyrthosiphon pisum (strain APS) (Acyrthosiphon pisum symbiotic bacterium).